The primary structure comprises 135 residues: MLLLRWKRFWFLSLGILLFSGVVSLMLFNLSESISFFYLPSDVARVVASNREIKVGGIIKAIKKSKDGVRFLLSDGAAEIEVLYEGILPSLVQDGINVVVVARFEGGLLLAKRVLVKHDERYYPPEDFIKSVRGE.

Topologically, residues 1–8 (MLLLRWKR) are cytoplasmic. The chain crosses the membrane as a helical; Signal-anchor for type II membrane protein span at residues 9–29 (FWFLSLGILLFSGVVSLMLFN). Over 30 to 135 (LSESISFFYL…EDFIKSVRGE (106 aa)) the chain is Periplasmic. Residues histidine 118 and tyrosine 122 each coordinate heme.

It belongs to the CcmE/CycJ family.

It localises to the cell inner membrane. Its function is as follows. Heme chaperone required for the biogenesis of c-type cytochromes. Transiently binds heme delivered by CcmC and transfers the heme to apo-cytochromes in a process facilitated by CcmF and CcmH. The sequence is that of Cytochrome c-type biogenesis protein CcmE from Neorickettsia sennetsu (strain ATCC VR-367 / Miyayama) (Ehrlichia sennetsu).